Consider the following 831-residue polypeptide: Leucine--tRNA ligase (831 aa).

A 'HIGH' region motif is present at residues 36–46 (PYPSGKLHIGH). The 'KMSKS' region signature appears at 607 to 611 (KMSKS). Lysine 610 is a binding site for ATP.

Belongs to the class-I aminoacyl-tRNA synthetase family.

Its subcellular location is the cytoplasm. It carries out the reaction tRNA(Leu) + L-leucine + ATP = L-leucyl-tRNA(Leu) + AMP + diphosphate. The protein is Leucine--tRNA ligase of Neorickettsia sennetsu (strain ATCC VR-367 / Miyayama) (Ehrlichia sennetsu).